The following is a 396-amino-acid chain: B2 bradykinin receptor (396 aa).

The Extracellular portion of the chain corresponds to 1-65; sequence MDTRSSLCPK…EWWSWLNAIQ (65 aa). N-linked (GlcNAc...) asparagine glycosylation is found at Asn-33 and Asn-44. A helical transmembrane segment spans residues 66 to 89; it reads APFLWVLFLLAALENIFVLSVFCL. The Cytoplasmic portion of the chain corresponds to 90–98; sequence HKTNCTVAE. Residues 99–123 traverse the membrane as a helical segment; sequence IYLGNLAAADLILACGLPFWAITIA. The Extracellular portion of the chain corresponds to 124-136; the sequence is NNFDWLFGEVLCR. Cys-135 and Cys-216 form a disulfide bridge. The helical transmembrane segment at 137-158 threads the bilayer; that stretch reads VVNTMIYMNLYSSICFLMLVSI. The Cytoplasmic segment spans residues 159–180; it reads DRYLALVKTMSMGRMRGVRWAK. Tyr-161 carries the phosphotyrosine modification. Residues 181 to 203 traverse the membrane as a helical segment; it reads LYSLVIWSCTLLLSSPMLVFRTM. Topologically, residues 204 to 226 are extracellular; sequence KDYREEGHNVTACVIVYPSRSWE. Asn-212 is a glycosylation site (N-linked (GlcNAc...) asparagine). A helical membrane pass occupies residues 227–253; it reads VFTNMLLNLVGFLLPLSIITFCTVRIM. Residues 254 to 272 are Cytoplasmic-facing; the sequence is QVLRNNEMKKFKEVQTEKK. The helical transmembrane segment at 273-297 threads the bilayer; the sequence is ATVLVLAVLGLFVLCWFPFQISTFL. The Extracellular portion of the chain corresponds to 298 to 316; the sequence is DTLLRLGVLSGCWNERAVD. The helical transmembrane segment at 317-340 threads the bilayer; sequence IVTQISSYVAYSNSCLNPLVYVIV. The Cytoplasmic segment spans residues 341-396; it reads GKRFRKKSREVYQAICRKGGCMGESVQMENSMGTLRTSISVDRQIHKLQDWAGNKQ. Tyr-352 bears the Phosphotyrosine mark. Cys-356 is lipidated: S-palmitoyl cysteine. A phosphoserine mark is found at Ser-365 and Ser-371. Thr-374 carries the post-translational modification Phosphothreonine. A phosphoserine; by GRK6 mark is found at Ser-378 and Ser-380.

This sequence belongs to the G-protein coupled receptor 1 family. Bradykinin receptor subfamily. BDKRB2 sub-subfamily. Forms a complex with PECAM1 and GNAQ. Interacts with PECAM1. Diphosphorylation at Ser-365 and Ser-371, at Ser-378 and Ser-380, and at Thr-374 and Ser-380 seem to be correlated pairwise. Post-translationally, palmitoylation at Cys-356 and phosphorylation at Tyr-352 seem to be mutually exclusive. In terms of tissue distribution, uterus, vas deferens, kidney, ileum, heart, testis, lung and brain.

It localises to the cell membrane. Receptor for bradykinin. It is associated with G proteins that activate a phosphatidylinositol-calcium second messenger system. The chain is B2 bradykinin receptor (Bdkrb2) from Rattus norvegicus (Rat).